The chain runs to 137 residues: MLQPKRTRFRKQFKGRIHGVSKGGTDLNFGAYGLKAVEPERITARQIEAARRAITRYMKRSGRVWIRIFPDLPVTSKPTEVRMGKGKGSVDYWAARVAPGRIMFELDGIPEDVAREALRLGAAKLPIKTRFIQRIAE.

It belongs to the universal ribosomal protein uL16 family. As to quaternary structure, part of the 50S ribosomal subunit.

In terms of biological role, binds 23S rRNA and is also seen to make contacts with the A and possibly P site tRNAs. The chain is Large ribosomal subunit protein uL16 from Bartonella henselae (strain ATCC 49882 / DSM 28221 / CCUG 30454 / Houston 1) (Rochalimaea henselae).